The primary structure comprises 62 residues: Large ribosomal subunit protein bL28 (62 aa).

The tract at residues 1–28 is disordered; sequence MARVCTITGRKARSGNSRSHAMNATKRK.

It belongs to the bacterial ribosomal protein bL28 family.

This is Large ribosomal subunit protein bL28 from Bacillus anthracis (strain CDC 684 / NRRL 3495).